The primary structure comprises 200 residues: Dephospho-CoA kinase (200 aa).

The 199-residue stretch at 2-200 (LIAVVGKAGV…CHHGHYQTPK (199 aa)) folds into the DPCK domain. 10-15 (GVGKTT) contributes to the ATP binding site.

It belongs to the CoaE family.

It localises to the cytoplasm. It catalyses the reaction 3'-dephospho-CoA + ATP = ADP + CoA + H(+). It participates in cofactor biosynthesis; coenzyme A biosynthesis; CoA from (R)-pantothenate: step 5/5. Functionally, catalyzes the phosphorylation of the 3'-hydroxyl group of dephosphocoenzyme A to form coenzyme A. In Mycoplasma pneumoniae (strain ATCC 29342 / M129 / Subtype 1) (Mycoplasmoides pneumoniae), this protein is Dephospho-CoA kinase.